The primary structure comprises 523 residues: MTNIHNHKILILDFGSQYTQLIARRVREIGVYCELWAWDVTEEQIREFNPTGIILSGGPESTTEENSPRAPEYVFNAGVPVLGICYGMQTMAMQLGGLTETSDHREFGYASVELKATDSLFAKLNDDLTACNPKLDVWMSHGDKVTRLPSNFQITGVTPTCPIAAMSDESRRFYGVQFHPEVTHTKSGLALLTNFVVNICGCETKWTAENIIEDAVARIKAQVGDDEVILGLSGGVDSSVTALLLHRAIGKNLHCVFVDNGLLRLNEGDQVMEMFGDKFGLNIIRVNAEDRFLDALKGIDEPEAKRKTIGKVFVDVFDDESKKLTSVKWLAQGTIYPDVIESAASKTGKAHVIKSHHNVGGLPDYMKLGLVEPLRELFKDEVRKIGLALGLPAEMLNRHPFPGPGLGVRVLGEIKKEYCDLVRRADAIFMEELHASGWYYKVSQAFTVFLPVKSVGVMGDGRKYDWAVSLRAVETIDFMTAHWAHLPYDLLGKISNRIINEVNGISRVVYDVSGKPPATIEWE.

Residues 8 to 205 form the Glutamine amidotransferase type-1 domain; sequence KILILDFGSQ…VVNICGCETK (198 aa). Cysteine 85 functions as the Nucleophile in the catalytic mechanism. Active-site residues include histidine 179 and glutamate 181. The 193-residue stretch at 206-398 folds into the GMPS ATP-PPase domain; sequence WTAENIIEDA…LGLPAEMLNR (193 aa). 233-239 provides a ligand contact to ATP; sequence SGGVDSS.

Homodimer.

It carries out the reaction XMP + L-glutamine + ATP + H2O = GMP + L-glutamate + AMP + diphosphate + 2 H(+). It participates in purine metabolism; GMP biosynthesis; GMP from XMP (L-Gln route): step 1/1. Its function is as follows. Catalyzes the synthesis of GMP from XMP. In Glaesserella parasuis serovar 5 (strain SH0165) (Haemophilus parasuis), this protein is GMP synthase [glutamine-hydrolyzing].